A 281-amino-acid polypeptide reads, in one-letter code: Merozoite surface protein 2 (281 aa).

The first 20 residues, 1 to 20 (MKVIKTLSIINFFIFVTFNI), serve as a signal peptide directing secretion. 2 N-linked (GlcNAc...) asparagine glycosylation sites follow: Asn22 and Asn36. The disordered stretch occupies residues 42–242 (SMEESNPPTG…DSQKECTDGN (201 aa)). The segment at 44–207 (EESNPPTGAS…EQTESPELQS (164 aa)) is polymorphic region. A run of 3 repeats spans residues 51–58 (GASGRAGA), 59–66 (GASGRAGA), and 67–74 (GASGRAGA). Residues 51 to 74 (GASGRAGAGASGRAGAGASGRAGA) form a 3 X 8 AA tandem repeats of G-A-S-G-R-A-G-A region. Gly residues predominate over residues 54–76 (GRAGAGASGRAGAGASGRAGAGA). Over residues 77-133 (GAVASAGSGDGAVASAGNGANPGADAKRSTSTPATTTTTTTTNDAEASTSTSSENPN) the composition is skewed to low complexity. 2 stretches are compositionally biased toward polar residues: residues 150 to 174 (NKANTETQNNSNVQQDSQTKSNVPP) and 181 to 209 (KSPTAQPEQAENSAPTAEQTESPELQSAP). A glycan (N-linked (GlcNAc...) asparagine) is linked at Asn158. N-linked (GlcNAc...) asparagine glycosylation is present at Asn230. Cys238 and Cys246 form a disulfide bridge. Residues Asn254 and Asn255 are each glycosylated (N-linked (GlcNAc...) asparagine). Asn255 is lipidated: GPI-anchor amidated asparagine. The propeptide at 256–281 (SSNIASINKFVVLISATLVLSFAIFI) is removed in mature form.

It is found in the cell membrane. In terms of biological role, may play a role in the merozoite attachment to the erythrocyte. This chain is Merozoite surface protein 2, found in Plasmodium falciparum (isolate thtn / Thailand).